Here is a 375-residue protein sequence, read N- to C-terminus: L-asparaginase 2 (375 aa).

Positions 1–19 (MKKQRMLVLFTALLFVFTG) are cleaved as a signal peptide. The segment at 22–46 (HSPETKESPKEKAQTQKVSSASASE) is disordered. Basic and acidic residues predominate over residues 24 to 35 (PETKESPKEKAQ). In terms of domain architecture, Asparaginase/glutaminase spans 51–375 (PNIRILATGG…QKIQAYFNEY (325 aa)). Thr-61 functions as the O-isoaspartyl threonine intermediate in the catalytic mechanism. Substrate contacts are provided by residues Ser-108 and 141 to 142 (TD).

This sequence belongs to the asparaginase 1 family. In terms of assembly, homotetramer.

The enzyme catalyses L-asparagine + H2O = L-aspartate + NH4(+). In terms of biological role, catalyzes the conversion of L-asparagine to L-aspartate and ammonium. This is L-asparaginase 2 (ansZ) from Bacillus subtilis (strain 168).